A 570-amino-acid chain; its full sequence is Dihydroxy-acid dehydratase (570 aa).

Cysteine 61 serves as a coordination point for [2Fe-2S] cluster. Aspartate 94 contributes to the Mg(2+) binding site. Cysteine 135 serves as a coordination point for [2Fe-2S] cluster. 2 residues coordinate Mg(2+): aspartate 136 and lysine 137. An N6-carboxylysine modification is found at lysine 137. Position 207 (cysteine 207) interacts with [2Fe-2S] cluster. Glutamate 459 contacts Mg(2+). The active-site Proton acceptor is serine 485.

The protein belongs to the IlvD/Edd family. Homodimer. It depends on [2Fe-2S] cluster as a cofactor. Requires Mg(2+) as cofactor.

The catalysed reaction is (2R)-2,3-dihydroxy-3-methylbutanoate = 3-methyl-2-oxobutanoate + H2O. The enzyme catalyses (2R,3R)-2,3-dihydroxy-3-methylpentanoate = (S)-3-methyl-2-oxopentanoate + H2O. It functions in the pathway amino-acid biosynthesis; L-isoleucine biosynthesis; L-isoleucine from 2-oxobutanoate: step 3/4. It participates in amino-acid biosynthesis; L-valine biosynthesis; L-valine from pyruvate: step 3/4. Its function is as follows. Functions in the biosynthesis of branched-chain amino acids. Catalyzes the dehydration of (2R,3R)-2,3-dihydroxy-3-methylpentanoate (2,3-dihydroxy-3-methylvalerate) into 2-oxo-3-methylpentanoate (2-oxo-3-methylvalerate) and of (2R)-2,3-dihydroxy-3-methylbutanoate (2,3-dihydroxyisovalerate) into 2-oxo-3-methylbutanoate (2-oxoisovalerate), the penultimate precursor to L-isoleucine and L-valine, respectively. This chain is Dihydroxy-acid dehydratase, found in Lactococcus lactis subsp. lactis (strain IL1403) (Streptococcus lactis).